The chain runs to 337 residues: RNA 3'-terminal phosphate cyclase (337 aa).

ATP is bound by residues Q101 and 282–285 (HMSD). H306 serves as the catalytic Tele-AMP-histidine intermediate.

It belongs to the RNA 3'-terminal cyclase family. Type 1 subfamily.

It is found in the cytoplasm. It catalyses the reaction a 3'-end 3'-phospho-ribonucleotide-RNA + ATP = a 3'-end 2',3'-cyclophospho-ribonucleotide-RNA + AMP + diphosphate. Its function is as follows. Catalyzes the conversion of 3'-phosphate to a 2',3'-cyclic phosphodiester at the end of RNA. The mechanism of action of the enzyme occurs in 3 steps: (A) adenylation of the enzyme by ATP; (B) transfer of adenylate to an RNA-N3'P to produce RNA-N3'PP5'A; (C) and attack of the adjacent 2'-hydroxyl on the 3'-phosphorus in the diester linkage to produce the cyclic end product. The biological role of this enzyme is unknown but it is likely to function in some aspects of cellular RNA processing. The sequence is that of RNA 3'-terminal phosphate cyclase from Saccharolobus islandicus (strain L.S.2.15 / Lassen #1) (Sulfolobus islandicus).